Reading from the N-terminus, the 1669-residue chain is Polycomb group protein Asx (1669 aa).

The segment at 90-109 is disordered; it reads IPPEKKPMAPSEEAAVSTAP. Positions 215 to 338 constitute a DEUBAD domain; sequence PDSILASTNL…FEPFWGEKNS (124 aa). 2 short sequence motifs (LXXLL motif) span residues 224 to 228 and 244 to 248; these read LRALL and LIQLL. An NEF motif motif is present at residues 283 to 285; the sequence is NEF. Basic and acidic residues predominate over residues 336–352; it reads KNSRGKDKDKLESDCKN. Disordered regions lie at residues 336–378, 410–478, 635–718, 952–972, 1174–1193, 1398–1437, 1482–1505, and 1587–1610; these read KNSR…QQAT, SSTF…IVPN, FFTS…SAGA, MPHQ…QQQR, QQQS…QQQL, PGPG…PEQL, LHSI…TAGS, and SPTA…QHQH. Composition is skewed to polar residues over residues 367–378, 413–425, and 434–450; these read ATSQQKPLQQAT, FPPT…VLNE, and PSSS…TIAT. Residues 465–474 are compositionally biased toward basic and acidic residues; it reads KDSKQPKMDE. The segment covering 635–650 has biased composition (low complexity); sequence FFTSSSSSNTATTAAN. Over residues 651 to 661 the composition is skewed to basic and acidic residues; that stretch reads KLEEHSDKPED. The span at 666-718 shows a compositional bias: low complexity; sequence IASSISGSTPASSITSTSCTSSSSSSASMSSSCSSSNSGSTTTAPTTSSSAGA. 2 stretches are compositionally biased toward low complexity: residues 1174 to 1192 and 1404 to 1436; these read QQQS…QQQQ and TATA…APEQ. Residues 1592–1610 are compositionally biased toward low complexity; sequence PSPINQQPQSQPTGTQHQH. The PHD-type; atypical zinc finger occupies 1602-1666; it reads QPTGTQHQHP…IGAAKLCVAC (65 aa).

It belongs to the Asx family. In terms of assembly, component of the polycomb repressive deubiquitinase (PR-DUB) complex, at least composed of caly/calypso, Asx and sba (MBD5/6 homolog). Interacts (via DEUBAD domain) with caly/calypso (via ULD domain); the interaction produces a stable heterodimer with a composite binding site for ubiquitin. Two copies of the caly-Asx heterodimer assemble into a bidentate tetramer. Interacts (via PHD domain) with sba (probably via MBD domain); the interaction is important for the stability of the PR-DUB complex. Interacts with tant. Interacts with cyclin CycG. In terms of tissue distribution, highly expressed in nurse cells and deposited in oocytes late in oogenesis. Ubiquitous in early embryos. Late embryos show higher levels in CNS and neurectoderm.

The protein localises to the nucleus. The protein resides in the chromosome. Its function is as follows. Non-catalytic component of the polycomb repressive deubiquitinase (PR-DUB) complex, a complex that specifically mediates deubiquitination of histone H2A monoubiquitinated at 'Lys-119' (H2AK118ub1). Activator of the PR-DUB complex involved in ubiquitin binding and allosteric activation of calypso deubiquitinase activity. PR-DUB does not deubiquitinate monoubiquitinated histone H2B. PR-DUB is required to maintain the transcriptionally repressive state of homeotic genes throughout development. The PR-DUB complex has weak or no activity toward 'Lys-48'- and 'Lys-63'-linked polyubiquitin chains. Atypical Polycomb group protein, which may be involved in both Polycomb group (PcG) and trithorax group (trxG) complexes. PcG and trxG proteins act by forming multiprotein complexes, which are respectively required to maintain the transcriptionally repressive and transcriptionally active state of homeotic genes throughout development. PcG and trxG protein complexes are not required to initiate repression and activation, but to maintain it during later stages of development. This Drosophila melanogaster (Fruit fly) protein is Polycomb group protein Asx.